Here is a 359-residue protein sequence, read N- to C-terminus: Cytokine receptor-like factor 2 (359 aa).

The N-terminal stretch at 1–19 (MAWALAVILLPRLLAAAAA) is a signal peptide. The Extracellular segment spans residues 20–232 (AAAVTSRGDV…PAPSPALAPP (213 aa)). A glycan (N-linked (GlcNAc...) asparagine) is linked at asparagine 53. A disulfide bridge links cysteine 68 with cysteine 82. The region spanning 119–213 (PPWNVTLLWT…WTAVTRLSGA (95 aa)) is the Fibronectin type-III domain. N-linked (GlcNAc...) asparagine glycosylation occurs at asparagine 122. 2 cysteine pairs are disulfide-bonded: cysteine 168–cysteine 169 and cysteine 181–cysteine 219. The short motif at 201-205 (PSEWT) is the WSXWS motif element. Residues 233–253 (LLPLGCGLAALLTLSLLLAAL) traverse the membrane as a helical segment. Residues 254–359 (RLRRVKDALL…MVGDSGYMTL (106 aa)) lie on the Cytoplasmic side of the membrane. The short motif at 262 to 270 (LLPCVPDPS) is the Box 1 motif element. Residues 312 to 336 (KRVEPEDGTSLCTVPRPPSFEPRGP) form a disordered region.

The protein belongs to the type I cytokine receptor family. Type 5 subfamily. The TSLP receptor is a heterodimer of CRLF2 and IL7R. Binding of TSLP to CRLF2/TSLPR is a mechanistic prerequisite for recruitment of IL7R to the high-affinity ternary complex. High level of expression in liver, lung and testis. Also expressed in heart, brain, spleen, thymus and bone marrow. Highly expressed in progenitors and myeloid cells. Isoform 2 is expressed in primary hemotopoietic cells.

It is found in the cell membrane. Its subcellular location is the secreted. Its function is as follows. Receptor for thymic stromal lymphopoietin (TSLP). Forms a functional complex with TSLP and IL7R which is capable of stimulating cell proliferation through activation of STAT3 and STAT5. Also activates JAK2. Implicated in the development of the hematopoietic system. The sequence is that of Cytokine receptor-like factor 2 (Crlf2) from Mus musculus (Mouse).